A 517-amino-acid polypeptide reads, in one-letter code: ATP synthase subunit alpha (517 aa).

Residue 174–181 (GDRQTGKT) participates in ATP binding.

Belongs to the ATPase alpha/beta chains family. In terms of assembly, F-type ATPases have 2 components, CF(1) - the catalytic core - and CF(0) - the membrane proton channel. CF(1) has five subunits: alpha(3), beta(3), gamma(1), delta(1), epsilon(1). CF(0) has three main subunits: a(1), b(2) and c(9-12). The alpha and beta chains form an alternating ring which encloses part of the gamma chain. CF(1) is attached to CF(0) by a central stalk formed by the gamma and epsilon chains, while a peripheral stalk is formed by the delta and b chains.

The protein localises to the cell inner membrane. The enzyme catalyses ATP + H2O + 4 H(+)(in) = ADP + phosphate + 5 H(+)(out). Functionally, produces ATP from ADP in the presence of a proton gradient across the membrane. The alpha chain is a regulatory subunit. This Variovorax paradoxus (strain S110) protein is ATP synthase subunit alpha.